The primary structure comprises 346 residues: Aspartate-semialdehyde dehydrogenase (346 aa).

Residues 10–13 and 38–39 each bind NADP(+); these read TGQG and RS. Arg98 serves as a coordination point for phosphate. Cys131 functions as the Acyl-thioester intermediate in the catalytic mechanism. A substrate-binding site is contributed by Gln158. 161 to 162 lines the NADP(+) pocket; that stretch reads SG. Phosphate is bound at residue Lys228. Arg250 contacts substrate. His257 (proton acceptor) is an active-site residue. An NADP(+)-binding site is contributed by Asn326.

It belongs to the aspartate-semialdehyde dehydrogenase family. Homodimer.

The enzyme catalyses L-aspartate 4-semialdehyde + phosphate + NADP(+) = 4-phospho-L-aspartate + NADPH + H(+). It participates in amino-acid biosynthesis; L-lysine biosynthesis via DAP pathway; (S)-tetrahydrodipicolinate from L-aspartate: step 2/4. The protein operates within amino-acid biosynthesis; L-methionine biosynthesis via de novo pathway; L-homoserine from L-aspartate: step 2/3. It functions in the pathway amino-acid biosynthesis; L-threonine biosynthesis; L-threonine from L-aspartate: step 2/5. Functionally, catalyzes the NADPH-dependent formation of L-aspartate-semialdehyde (L-ASA) by the reductive dephosphorylation of L-aspartyl-4-phosphate. The protein is Aspartate-semialdehyde dehydrogenase of Mycolicibacterium smegmatis (Mycobacterium smegmatis).